Reading from the N-terminus, the 463-residue chain is MAGLSRILLSCTLACLLAGQAAQASVDDPTRAGGDNRVRALRADQARRDVLLTACRDDPGHRRGEPDCVNAERAQALQQWQAAAMTSVDAAFSDLAGALRNAAPRRMEAAIVRLTRQLQPLVYSMMTLLVLLTGYALLARRDRPFEWHIRHALLVAVVTSLALSPDRYLSTVVAGVQDVAGWLSGPWTAPDGAAGRGGLAQLDQFAAQAQAWVAQLAGQAANDANPGSAVNWLLCAMIVAASAGGWLCLAASLLIVPGLIVTLLLSLGPLFLVLLLFPALQRWTNAWLGALVRALVFMALGTPAVGLLSDVLAGALPAGLPQRFATDPLRSTMLAATLCATATLMLLTLVPLASSVNAGLRRRLWPNAAHPGLAQAHRQAAARQYAPRPAAAAAAAGPHQAGTYAASATPAPAPARPAPSFPAHAYRQYALGGARRPPPRVRRDDRPAPAPDRRVLPRKPNLP.

Residues 1-24 form the signal peptide; it reads MAGLSRILLSCTLACLLAGQAAQA. A run of 5 helical transmembrane segments spans residues 118-138, 232-252, 253-273, 294-314, and 333-353; these read LQPL…YALL, WLLC…LAAS, LLIV…LFLV, ALVF…VLAG, and MLAA…VPLA. Positions 376 to 410 are enriched in low complexity; sequence AHRQAAARQYAPRPAAAAAAAGPHQAGTYAASATP. The tract at residues 376–463 is disordered; sequence AHRQAAARQY…RVLPRKPNLP (88 aa). A compositionally biased stretch (pro residues) spans 411–420; that stretch reads APAPARPAPS. Basic and acidic residues predominate over residues 441–455; sequence VRRDDRPAPAPDRRV.

Its subcellular location is the cell membrane. Component of the type IV secretion system ptl required for secretion of assembled pertussis toxin (PTX) through the outer membrane. This chain is Type IV secretion system protein PtlD (ptlD), found in Bordetella pertussis (strain Tohama I / ATCC BAA-589 / NCTC 13251).